Here is a 74-residue protein sequence, read N- to C-terminus: Exodeoxyribonuclease 7 small subunit (74 aa).

The protein belongs to the XseB family. In terms of assembly, heterooligomer composed of large and small subunits.

Its subcellular location is the cytoplasm. It carries out the reaction Exonucleolytic cleavage in either 5'- to 3'- or 3'- to 5'-direction to yield nucleoside 5'-phosphates.. Its function is as follows. Bidirectionally degrades single-stranded DNA into large acid-insoluble oligonucleotides, which are then degraded further into small acid-soluble oligonucleotides. The chain is Exodeoxyribonuclease 7 small subunit from Synechococcus elongatus (strain ATCC 33912 / PCC 7942 / FACHB-805) (Anacystis nidulans R2).